The sequence spans 986 residues: E3 ubiquitin-protein ligase Arkadia (986 aa).

Residues K19, K28, K34, K47, K59, K73, K87, K96, and K110 each participate in a glycyl lysine isopeptide (Lys-Gly) (interchain with G-Cter in SUMO2) cross-link. Basic and acidic residues predominate over residues 66–89 (HLCDDSQKQEKDMNGNQQEQEKSL). The interval 66–106 (HLCDDSQKQEKDMNGNQQEQEKSLVVRKKRKSQQAGPSYVQ) is disordered. The interval 120 to 191 (QHLGTPSDED…HKWPRTETES (72 aa)) is disordered. Low complexity predominate over residues 132 to 151 (SSFSDCLSSPSSSLHFGDSD). The span at 164–173 (RHSQTILNAK) shows a compositional bias: polar residues. A Glycyl lysine isopeptide (Lys-Gly) (interchain with G-Cter in SUMO2) cross-link involves residue K173. Residues 174–184 (SRSHSARSHKW) are compositionally biased toward basic residues. Glycyl lysine isopeptide (Lys-Gly) (interchain with G-Cter in SUMO2) cross-links involve residues K198 and K218. Residues 241–404 (VLARRKYALL…VPTTSARMES (164 aa)) form an interaction with AXIN1 region. The segment at 248 to 277 (ALLPSSSSSSENDLSSESSSSSSTEGEEDL) is disordered. Low complexity predominate over residues 252 to 271 (SSSSSSENDLSSESSSSSST). The SUMO interaction motif 1 (SIM) signature appears at 300-304 (VVVIE). An SUMO interaction motif 2 (SIM) motif is present at residues 325-331 (EVEIVTV). The interval 337-373 (SRSTLGHSRSHWSQGSSSHASRPQEPRNRSRISTVIQ) is disordered. Low complexity predominate over residues 347 to 357 (HWSQGSSSHAS). The SUMO interaction motif 3 (SIM) motif lies at 382–386 (VVDLT). Disordered stretches follow at residues 389-471 (EDEP…ETGP), 506-561 (QQHG…SYHE), 610-646 (APSQ…RHYM), 659-684 (HQAS…VDYV), and 696-719 (ISSH…TAAP). Residues 395–466 (VPTTSARMES…DSRRTTSSAV (72 aa)) show a composition bias toward polar residues. A compositionally biased stretch (basic residues) spans 508–522 (HGHHFQHHHHHHHTP). The segment covering 551 to 561 (ANSSSGTSYHE) has biased composition (polar residues). The segment covering 670-680 (NPPPQTQPPPQ) has biased composition (pro residues). Positions 907–909 (YPH) are ubiquitin binding. Residues K915 and K919 each participate in a glycyl lysine isopeptide (Lys-Gly) (interchain with G-Cter in SUMO2) cross-link. Positions 934 and 937 each coordinate Zn(2+). The segment at 934-975 (CTICLSILEEGEDVRRLPCMHLFHQVCVDQWLITNKKCPICR) adopts an RING-type; atypical zinc-finger fold. The ubiquitin binding stretch occupies residues 949 to 953 (RLPCM). The Zn(2+) site is built by H957 and C960.

Belongs to the Arkadia family. In terms of assembly, monomer. Interacts with SMAD6, SMAD7, AXIN1, AXIN2 and SKIL isoform SNON. Interacts with (phosphorylated) SMAD2 and SMAD3. Part of a complex containing RNF111, AXIN1 and SMAD7. Interacts (via SIM domains) with SUMO1 and SUMO2.

Its subcellular location is the nucleus. The protein localises to the cytoplasm. The protein resides in the PML body. The catalysed reaction is S-ubiquitinyl-[E2 ubiquitin-conjugating enzyme]-L-cysteine + [acceptor protein]-L-lysine = [E2 ubiquitin-conjugating enzyme]-L-cysteine + N(6)-ubiquitinyl-[acceptor protein]-L-lysine.. It participates in protein modification; protein ubiquitination. Its activity is regulated as follows. Binds free ubiquitin non-covalently via its RING-type zinc finger. Ubiquitin-binding leads to enhance the E3 ubiquitin-protein ligase activity by stabilizing the ubiquitin-conjugating enzyme E2 (donor ubiquitin) in the 'closed' conformation and activating ubiquitin transfer. In terms of biological role, E3 ubiquitin-protein ligase. Required for mesoderm patterning during embryonic development. Acts as an enhancer of the transcriptional responses of the SMAD2/SMAD3 effectors, which are activated downstream of BMP. Acts by mediating ubiquitination and degradation of SMAD inhibitors such as SMAD7, inducing their proteasomal degradation and thereby enhancing the transcriptional activity of TGF-beta and BMP. In addition to enhance transcription of SMAD2/SMAD3 effectors, also regulates their turnover by mediating their ubiquitination and subsequent degradation, coupling their activation with degradation, thereby ensuring that only effectors 'in use' are degraded. Activates SMAD3/SMAD4-dependent transcription by triggering signal-induced degradation of SNON isoform of SKIL. Associates with UBE2D2 as an E2 enzyme. Specifically binds polysumoylated chains via SUMO interaction motifs (SIMs) and mediates ubiquitination of sumoylated substrates. Catalyzes 'Lys-63'-linked ubiquitination of sumoylated XPC in response to UV irradiation, promoting nucleotide excision repair. Mediates ubiquitination and degradation of sumoylated PML. The regulation of the BMP-SMAD signaling is however independent of sumoylation and is not dependent of SUMO interaction motifs (SIMs). This is E3 ubiquitin-protein ligase Arkadia (RNF111) from Pongo abelii (Sumatran orangutan).